The following is a 395-amino-acid chain: Putative pyridoxal phosphate-dependent acyltransferase (395 aa).

Position 110–111 (110–111) interacts with pyridoxal 5'-phosphate; that stretch reads GF. Position 135 (His135) interacts with substrate. Residues Ser185, 210–213, and 240–243 each bind pyridoxal 5'-phosphate; these read DDAH and TLSK. Residue Lys243 is modified to N6-(pyridoxal phosphate)lysine. Thr357 is a substrate binding site.

The protein belongs to the class-II pyridoxal-phosphate-dependent aminotransferase family. As to quaternary structure, homodimer. It depends on pyridoxal 5'-phosphate as a cofactor.

This Staphylococcus aureus (strain COL) protein is Putative pyridoxal phosphate-dependent acyltransferase.